Consider the following 491-residue polypeptide: UDP-N-acetylmuramate--L-alanine ligase (491 aa).

Gly126–Thr132 contributes to the ATP binding site.

The protein belongs to the MurCDEF family.

Its subcellular location is the cytoplasm. The enzyme catalyses UDP-N-acetyl-alpha-D-muramate + L-alanine + ATP = UDP-N-acetyl-alpha-D-muramoyl-L-alanine + ADP + phosphate + H(+). It functions in the pathway cell wall biogenesis; peptidoglycan biosynthesis. In terms of biological role, cell wall formation. This Salmonella choleraesuis (strain SC-B67) protein is UDP-N-acetylmuramate--L-alanine ligase.